A 349-amino-acid polypeptide reads, in one-letter code: Glycerol-3-phosphate dehydrogenase [NAD(+)], cytoplasmic (349 aa).

Residue 10–15 (GSGNWG) coordinates NAD(+). Position 120 (Lys-120) interacts with substrate. Residue Ala-153 participates in NAD(+) binding. Lys-204 (proton acceptor) is an active-site residue. An NAD(+)-binding site is contributed by Arg-269. 269–270 (RN) provides a ligand contact to substrate. Lys-289 carries the N6-succinyllysine modification. NAD(+) contacts are provided by Lys-296 and Gln-298. Tyr-326 is subject to Phosphotyrosine.

The protein belongs to the NAD-dependent glycerol-3-phosphate dehydrogenase family. Homodimer.

The protein resides in the cytoplasm. It catalyses the reaction sn-glycerol 3-phosphate + NAD(+) = dihydroxyacetone phosphate + NADH + H(+). In terms of biological role, has glycerol-3-phosphate dehydrogenase activity. This chain is Glycerol-3-phosphate dehydrogenase [NAD(+)], cytoplasmic (GPD1), found in Bos taurus (Bovine).